We begin with the raw amino-acid sequence, 713 residues long: Phospholipase A1 PLIP2, chloroplastic (713 aa).

The transit peptide at 1–32 (MDSLCLNSGLHGVIPAITAVGNGGCGGVVEVR) directs the protein to the chloroplast. Disordered regions lie at residues 118–140 (WKHE…DEEV) and 232–261 (ALKA…EKNK). The segment covering 122–140 (EEEDDDEVEDEDGDEDEEV) has biased composition (acidic residues). The short motif at 426–430 (GHSLG) is the GXSXG element. Residue Ser-428 is the Acyl-ester intermediate of the active site. Active-site charge relay system residues include Asp-489 and His-608.

The protein belongs to the AB hydrolase superfamily. Lipase family.

It localises to the plastid. It is found in the chloroplast membrane. Its subcellular location is the chloroplast stroma. The catalysed reaction is a 1,2-diacyl-3-O-(beta-D-galactosyl)-sn-glycerol + 2 H2O = 3-beta-D-galactosyl-sn-glycerol + 2 a fatty acid + 2 H(+). The enzyme catalyses a 1,2-diacyl-sn-glycero-3-phosphocholine + H2O = a 2-acyl-sn-glycero-3-phosphocholine + a fatty acid + H(+). It catalyses the reaction 1-hexadecanoyl-2-(9Z-octadecenoyl)-sn-glycero-3-phosphocholine + H2O = 2-(9Z-octadecenoyl)-sn-glycero-3-phosphocholine + hexadecanoate + H(+). It carries out the reaction 1,2-di-(9Z-octadecenoyl)-sn-glycero-3-phosphocholine + H2O = 2-(9Z-octadecenoyl)-sn-glycero-3-phosphocholine + (9Z)-octadecenoate + H(+). The catalysed reaction is 1-octadecanoyl-2-(9Z-octadecenoyl)-sn-glycero-3-phosphocholine + H2O = 2-(9Z-octadecenoyl)-sn-glycero-3-phosphocholine + octadecanoate + H(+). The enzyme catalyses 1-octadecanoyl-2-(9Z,12Z)-octadecadienoyl-sn-glycero-3-phosphocholine + H2O = 2-(9Z,12Z-octadecadienoyl)-sn-glycero-3-phosphocholine + octadecanoate + H(+). It catalyses the reaction 1,2-di-(9Z,12Z-octadecadienoyl)-sn-glycero-3-phosphocholine + H2O = 2-(9Z,12Z-octadecadienoyl)-sn-glycero-3-phosphocholine + (9Z,12Z)-octadecadienoate + H(+). It carries out the reaction 1-(9Z-octadecenoyl)-2-hexadecanoyl-sn-glycero-3-phosphocholine + H2O = 2-hexadecanoyl-sn-glycero-3-phosphocholine + (9Z)-octadecenoate + H(+). Its function is as follows. Sn-1-specific phospholipase A1 that catalyzes the initial step of oxylipins and jasmonate (JA) biosynthesis. Hydrolyzes polyunsaturated acyl groups preferentially from chloroplastic monogalactosyldiacylglycerol (MGDG). May function downstream of abscisic acid (ABA) and provide a link between ABA-mediated abiotic stress responses and oxylipin and JA signalings. In vitro, possesses broad substrate specificity. Can hydrolyze the galactolipids monogalactosyldiacylglycerol (MGDG) and digalactosyldiacylglycerol (DGDG), the sulfolipid sulfoquinovosyldiacylglycerol (SQDG), and the phoshpolipids phosphatidylcholine (PC), and phosphatidylglycerol (PG). This chain is Phospholipase A1 PLIP2, chloroplastic, found in Arabidopsis thaliana (Mouse-ear cress).